A 684-amino-acid polypeptide reads, in one-letter code: MAGVKAGLYLQSSVSALRGVGPALVSRLQHMDLWRVQDVLFHLPSRYQDRRHIASMATLQAGQERAILGEIVRVDHQRGGREQWLVTVSDGSGCLQIRLFHMALALRAQWQVGRRLWCFGELRGGFHGLEMIHPEWQMADVPQFQAPHHLTPFYPSSEGITQAQWRRWIAHALTLLDQLPDYLENRLPPQWPGLREGLRLLHESADEIPSPQHPAWQRLALEELLANHLAVRRMRQSGMMQNAPCLRSKGQMWQRFLAHLPFSPTMAQERVIAEINADLARHRPMRRLLQGDVGSGKTLVAAAATLTALEAGYQVAMMAPTEILAEQLHARFQQWLEPLGLEVGYLVGSRSPRVRRETAEALAGGRLSLVIGTQSLFQEGVAFACLGLVIIDEQHRFGVEQRRQLLEKGAMPHLLVMTATPIPRTLAMTVHADLEVSVIDALPPGRTPVETLVMPDSRRPELIGRMQHMLEAGRQIYWVCPLIEESEILELQAAEASVADLQAALPGVAVGLIHGRMRSAEKAEVMAAFQSGAVRILVATTVIEVGVDVPGASLMIIEHAERLGLAQLHQLRGRVGRGAQRSSCILLYHPPLSGKARERLRVMRETYDGFSIARKDLELRGPGEYLGTRQAGILQMRVANILRDEALLAMVPALAERLLQEDPEAVQAIVQRWLGNRVDYGQVG.

Residues 51–148 (RHIASMATLQ…ADVPQFQAPH (98 aa)) are wedge domain. Positions 278–439 (DLARHRPMRR…VHADLEVSVI (162 aa)) constitute a Helicase ATP-binding domain. 291 to 298 (GDVGSGKT) is an ATP binding site. Residues 392-395 (DEQH) carry the DEAH box motif.

This sequence belongs to the helicase family. RecG subfamily. As to quaternary structure, monomer.

It catalyses the reaction Couples ATP hydrolysis with the unwinding of duplex DNA by translocating in the 3'-5' direction.. It carries out the reaction ATP + H2O = ADP + phosphate + H(+). Plays a critical role in recombination and DNA repair. Helps process Holliday junction intermediates to mature products by catalyzing branch migration. Has replication fork regression activity, unwinds stalled or blocked replication forks to make a HJ that can be resolved. Has a DNA unwinding activity characteristic of a DNA helicase with 3'-5' polarity. The protein is ATP-dependent DNA helicase RecG of Acidithiobacillus ferridurans.